Reading from the N-terminus, the 263-residue chain is MGLMNAFDSQTEDSSPAIGRNLRSRPLARKKLSEMVEEELEQMIRRREFGEGEQLPSERELMAFFNVGRPSVREALAALKRKGLVQINNGERARVSRPSADTIIGELSGMAKDFLSHPGGIAHFEQLRLFFESSLVRYAAEHATDEQIDLLAKALEINSQSLDNNAAFIRSDVDFHRVLAEIPGNPIFMAIHVALLDWLIAARPTVTDQALHEHNNVSYQQHIAIVDAIRRHDPDEADRALQSHLNSVSATWHAFGQTTNKKK.

A disordered region spans residues 1–22 (MGLMNAFDSQTEDSSPAIGRNL). One can recognise an HTH gntR-type domain in the interval 30 to 98 (KKLSEMVEEE…NGERARVSRP (69 aa)). Residues 58–77 (ERELMAFFNVGRPSVREALA) constitute a DNA-binding region (H-T-H motif).

The protein belongs to the NanR family.

In terms of biological role, transcriptional repressor that controls expression of the genes required for the catabolism of sialic acids. The chain is HTH-type transcriptional repressor NanR from Shigella boydii serotype 4 (strain Sb227).